We begin with the raw amino-acid sequence, 403 residues long: Tryptophan synthase beta chain 1 (403 aa).

An N6-(pyridoxal phosphate)lysine modification is found at lysine 93.

This sequence belongs to the TrpB family. Tetramer of two alpha and two beta chains. Requires pyridoxal 5'-phosphate as cofactor.

It catalyses the reaction (1S,2R)-1-C-(indol-3-yl)glycerol 3-phosphate + L-serine = D-glyceraldehyde 3-phosphate + L-tryptophan + H2O. Its pathway is amino-acid biosynthesis; L-tryptophan biosynthesis; L-tryptophan from chorismate: step 5/5. In terms of biological role, the beta subunit is responsible for the synthesis of L-tryptophan from indole and L-serine. The chain is Tryptophan synthase beta chain 1 (trpB1) from Methanosarcina acetivorans (strain ATCC 35395 / DSM 2834 / JCM 12185 / C2A).